A 416-amino-acid chain; its full sequence is Mitochondrial inner membrane i-AAA protease complex subunit MGR1 (416 aa).

Positions 1–28 (MAVFTPPSGNSNSTDHTHTQDDHDKDDN) are disordered. At 1–56 (MAVFTPPSGNSNSTDHTHTQDDHDKDDNDIKKFYIRPSLGLKLWGPLVPAPDNLPG) the chain is on the mitochondrial intermembrane side. The segment covering 15–28 (DHTHTQDDHDKDDN) has biased composition (basic and acidic residues). A helical membrane pass occupies residues 57 to 73 (LYTLITIQSAVGFFALW). Residues 74–151 (RLRRLYKLPP…RQSRFVSVRK (78 aa)) are Mitochondrial matrix-facing. The helical transmembrane segment at 152–169 (LLWGLFGSLLLSQSLLEL) threads the bilayer. The Mitochondrial intermembrane segment spans residues 170-416 (TRLNFLKYDP…PKALTNEKTH (247 aa)). Residues 390–400 (SHTKTPTSTDQ) are compositionally biased toward polar residues. Residues 390-416 (SHTKTPTSTDQPLPGPTPKALTNEKTH) form a disordered region.

This sequence belongs to the MGR1 family. In terms of assembly, component of the mitochondrial inner membrane i-AAA protease complex composed of at least MRG1 and YME1. Interacts directly with YME1.

Its subcellular location is the mitochondrion inner membrane. Functionally, component of the mitochondrial inner membrane i-AAA protease complex required for mitochondrial inner membrane protein turnover. Required for growth of cells lacking the mitochondrial genome. This chain is Mitochondrial inner membrane i-AAA protease complex subunit MGR1 (MGR1), found in Saccharomyces cerevisiae (strain YJM789) (Baker's yeast).